The chain runs to 341 residues: tRNA N6-adenosine threonylcarbamoyltransferase (341 aa).

Positions 111 and 115 each coordinate Fe cation. Substrate contacts are provided by residues 134–138 (LVSGG), Asp167, Gly180, and Asn276. Residue Asp304 coordinates Fe cation.

Belongs to the KAE1 / TsaD family. Fe(2+) is required as a cofactor.

Its subcellular location is the cytoplasm. It carries out the reaction L-threonylcarbamoyladenylate + adenosine(37) in tRNA = N(6)-L-threonylcarbamoyladenosine(37) in tRNA + AMP + H(+). In terms of biological role, required for the formation of a threonylcarbamoyl group on adenosine at position 37 (t(6)A37) in tRNAs that read codons beginning with adenine. Is involved in the transfer of the threonylcarbamoyl moiety of threonylcarbamoyl-AMP (TC-AMP) to the N6 group of A37, together with TsaE and TsaB. TsaD likely plays a direct catalytic role in this reaction. The chain is tRNA N6-adenosine threonylcarbamoyltransferase from Stutzerimonas stutzeri (strain A1501) (Pseudomonas stutzeri).